The primary structure comprises 482 residues: MKFIVKPHPEVFVKSDSVRKRFIRILETNLRSIIQRDTKGVEVINRRDYIEVSGLDGTYRNQVLTAVTHTPGIHHTLEVKQTAFADMHDIYEQCLEMNREIIEGKTFCVRVKRRGTHPFTSIELERYVGGGLNQAVESAKVKLKNPDVTVKFEVENEKLNLVIARHKGLGGFPLGTQEDVLSLISGGFDSGVSSYLHIKRGSKVHYMFFNLGGPAHEIGVKQVSHFLWKKYGSSAKVKFIAVDFEPVVAEILEKVDDGQMGVILKRMFMRAGGMVAEKLGIQGMVTGEALGQVSSQTLTNLRHIDNVTDTLILRPLINWDKEDIINVARDIGTEDFAKTMPEYCGVISKKPTIKAEKLKLEKEEAKFDFSILDQVIYDARVMDIRAIEKESQEQAPEVEMVSELGSDVVVLDIRSAEEEDESPLIIEGVEVKHLPFFRIATQFGDLDQSKEYLLYCDHGVMSRLQALLLIENGYKNVKVYRP.

The THUMP domain occupies 61-165 (NQVLTAVTHT…NEKLNLVIAR (105 aa)). ATP is bound by residues 183–184 (LI), Lys265, Gly287, and Gln296. Cysteines 344 and 456 form a disulfide. One can recognise a Rhodanese domain in the interval 404–482 (LGSDVVVLDI…GYKNVKVYRP (79 aa)). The Cysteine persulfide intermediate role is filled by Cys456.

Belongs to the ThiI family.

It is found in the cytoplasm. The enzyme catalyses [ThiI sulfur-carrier protein]-S-sulfanyl-L-cysteine + a uridine in tRNA + 2 reduced [2Fe-2S]-[ferredoxin] + ATP + H(+) = [ThiI sulfur-carrier protein]-L-cysteine + a 4-thiouridine in tRNA + 2 oxidized [2Fe-2S]-[ferredoxin] + AMP + diphosphate. It carries out the reaction [ThiS sulfur-carrier protein]-C-terminal Gly-Gly-AMP + S-sulfanyl-L-cysteinyl-[cysteine desulfurase] + AH2 = [ThiS sulfur-carrier protein]-C-terminal-Gly-aminoethanethioate + L-cysteinyl-[cysteine desulfurase] + A + AMP + 2 H(+). The protein operates within cofactor biosynthesis; thiamine diphosphate biosynthesis. Catalyzes the ATP-dependent transfer of a sulfur to tRNA to produce 4-thiouridine in position 8 of tRNAs, which functions as a near-UV photosensor. Also catalyzes the transfer of sulfur to the sulfur carrier protein ThiS, forming ThiS-thiocarboxylate. This is a step in the synthesis of thiazole, in the thiamine biosynthesis pathway. The sulfur is donated as persulfide by IscS. The chain is tRNA sulfurtransferase from Aliivibrio salmonicida (strain LFI1238) (Vibrio salmonicida (strain LFI1238)).